Consider the following 164-residue polypeptide: UPF0305 protein MJ0646 (164 aa).

It belongs to the UPF0305 family.

This is UPF0305 protein MJ0646 from Methanocaldococcus jannaschii (strain ATCC 43067 / DSM 2661 / JAL-1 / JCM 10045 / NBRC 100440) (Methanococcus jannaschii).